Consider the following 1396-residue polypeptide: Melanoma inhibitory activity protein 2 (1396 aa).

The first 22 residues, 1–22, serve as a signal peptide directing secretion; sequence MAEVSVQRILLLVVSLAKCLEG. Topologically, residues 23 to 604 are lumenal; it reads TKLLAHLKKC…YGFMSSALSP (582 aa). In terms of domain architecture, SH3 spans 39-101; sequence TLISRVLALR…PRDAVEIEEV (63 aa). An N-linked (GlcNAc...) asparagine glycan is attached at Asn-59. Disordered regions lie at residues 197 to 288 and 331 to 361; these read EGAG…VPDE and ESNP…TDKE. A compositionally biased stretch (acidic residues) spans 243 to 258; it reads SDTEPTQELALEEESD. The N-linked (GlcNAc...) asparagine glycan is linked to Asn-366. Disordered stretches follow at residues 396–421 and 525–557; these read DKGE…PEKE and PMEE…ELSV. Residues 605-625 lie within the membrane without spanning it; sequence IEILLESVVAALPEDMRADFN. Topologically, residues 626-628 are lumenal; sequence PSG. Residues 629 to 649 traverse the membrane as a helical segment; that stretch reads FSLELAVCVLSVGLLAVVLFL. At 650-1396 the chain is on the cytoplasmic side; the sequence is WRGFRSIRSR…AADPPETQEA (747 aa). The segment at 651–1243 is mediates interaction with MIA3; sequence RGFRSIRSRF…RSYNMPSLDK (593 aa). 2 coiled-coil regions span residues 693–867 and 914–1082; these read YEGL…LVTS and AAKL…NRQK. Residues 1103–1396 are disordered; the sequence is PNTAFGREHS…AADPPETQEA (294 aa). Residues 1105-1396 are proline-rich domain (PRD); probably mediates interaction with COPII coat subunits; that stretch reads TAFGREHSPY…AADPPETQEA (292 aa). Over residues 1135-1146 the composition is skewed to low complexity; that stretch reads LLEGPLRLSPLL. A compositionally biased stretch (basic and acidic residues) spans 1165–1179; sequence MNTERGESSYDRLSD. Residues 1252–1269 show a composition bias toward polar residues; it reads MESSGNGTKDNLGNSNVP. 2 stretches are compositionally biased toward pro residues: residues 1331–1342 and 1351–1368; these read RDFPGPPLPPFP and GFPP…PPPH.

The protein belongs to the MIA/OTOR family. As to quaternary structure, interacts with MIA3. Interacts with the COPII coat subunits SEC23A, SEC23B and maybe SEC24C. Interacts with PREB; recruits PREB to endoplasmic reticulum exit sites. Interacts with APOB. In terms of tissue distribution, isoform 1 is expressed in liver (at protein level). Isoform 2 is highly expressed in liver and weakly in testis.

It is found in the endoplasmic reticulum membrane. Functionally, plays a role in the transport of cargos that are too large to fit into COPII-coated vesicles and require specific mechanisms to be incorporated into membrane-bound carriers and exported from the endoplasmic reticulum. Plays a role in the secretion of lipoproteins, pre-chylomicrons and pre-VLDLs, by participating in their export from the endoplasmic reticulum. Thereby, may play a role in cholesterol and triglyceride homeostasis. Required for collagen VII (COL7A1) secretion by loading COL7A1 into transport carriers and recruiting PREB/SEC12 at the endoplasmic reticulum exit sites. In Mus musculus (Mouse), this protein is Melanoma inhibitory activity protein 2.